Consider the following 341-residue polypeptide: Ferrochelatase (341 aa).

Residues histidine 189 and glutamate 293 each contribute to the Fe cation site.

This sequence belongs to the ferrochelatase family.

The protein resides in the cytoplasm. The catalysed reaction is heme b + 2 H(+) = protoporphyrin IX + Fe(2+). The protein operates within porphyrin-containing compound metabolism; protoheme biosynthesis; protoheme from protoporphyrin-IX: step 1/1. Its function is as follows. Catalyzes the ferrous insertion into protoporphyrin IX. The polypeptide is Ferrochelatase (Pseudomonas fluorescens (strain SBW25)).